Consider the following 81-residue polypeptide: Large ribosomal subunit protein bL31B (81 aa).

The protein belongs to the bacterial ribosomal protein bL31 family. Type B subfamily. In terms of assembly, part of the 50S ribosomal subunit.

In Halalkalibacterium halodurans (strain ATCC BAA-125 / DSM 18197 / FERM 7344 / JCM 9153 / C-125) (Bacillus halodurans), this protein is Large ribosomal subunit protein bL31B.